The sequence spans 239 residues: Transcriptional regulatory protein BtsR (239 aa).

The region spanning 3–116 (KVLIVDDEPL…RLEKTLARLR (114 aa)) is the Response regulatory domain. D54 carries the 4-aspartylphosphate modification. In terms of domain architecture, HTH LytTR-type spans 137-239 (IPCTGHSRIY…LKSLKEAIGL (103 aa)).

Phosphorylated by BtsS.

Its function is as follows. Member of the two-component regulatory system BtsS/BtsR. BtsR regulates expression of btsT by binding to its promoter region. In Escherichia coli O6:H1 (strain CFT073 / ATCC 700928 / UPEC), this protein is Transcriptional regulatory protein BtsR.